We begin with the raw amino-acid sequence, 220 residues long: UPF0758 protein ASA_4229 (220 aa).

One can recognise an MPN domain in the interval 95–220 (EQLQRGDALT…TVSFAERGWL (126 aa)). Positions 169, 171, and 182 each coordinate Zn(2+). The JAMM motif motif lies at 169-182 (HNHPSGVAEPSRAD).

This sequence belongs to the UPF0758 family.

The protein is UPF0758 protein ASA_4229 of Aeromonas salmonicida (strain A449).